Reading from the N-terminus, the 158-residue chain is Cyclic pyranopterin monophosphate synthase (158 aa).

Residues 76–78 and 114–115 each bind substrate; these read LCH and ME. The active site involves aspartate 129.

The protein belongs to the MoaC family. In terms of assembly, homohexamer; trimer of dimers.

The enzyme catalyses (8S)-3',8-cyclo-7,8-dihydroguanosine 5'-triphosphate = cyclic pyranopterin phosphate + diphosphate. Its pathway is cofactor biosynthesis; molybdopterin biosynthesis. Its function is as follows. Catalyzes the conversion of (8S)-3',8-cyclo-7,8-dihydroguanosine 5'-triphosphate to cyclic pyranopterin monophosphate (cPMP). This chain is Cyclic pyranopterin monophosphate synthase, found in Shewanella woodyi (strain ATCC 51908 / MS32).